Here is a 1132-residue protein sequence, read N- to C-terminus: Mis18-binding protein 1 (1132 aa).

A Glycyl lysine isopeptide (Lys-Gly) (interchain with G-Cter in SUMO2) cross-link involves residue Lys7. Position 9 is a phosphoserine (Ser9). Residue Lys65 forms a Glycyl lysine isopeptide (Lys-Gly) (interchain with G-Cter in SUMO2) linkage. A phosphoserine mark is found at Ser110, Ser131, Ser135, Ser172, and Ser192. Residues 123-154 are disordered; the sequence is LRDKQEQPSRNSSLLEPQKSGNNETFTPNRVE. Positions 130–150 are enriched in polar residues; that stretch reads PSRNSSLLEPQKSGNNETFTP. Residues Lys211 and Lys262 each participate in a glycyl lysine isopeptide (Lys-Gly) (interchain with G-Cter in SUMO2) cross-link. Ser299 carries the phosphoserine modification. A disordered region spans residues 306-332; sequence SERTTEGTSQQKVKEGNGKTVPGETGL. Ser365 carries the phosphoserine modification. The region spanning 383–469 is the SANTA domain; sequence VQLQEWMIKS…MFGFPENWKE (87 aa). Residues 482–518 form a disordered region; the sequence is EKNREKTKQKQKTGRSVRDIRKSMKNDARENQTDTAQ. The segment covering 497–513 has biased composition (basic and acidic residues); sequence SVRDIRKSMKNDARENQ. Residues Lys534, Lys612, Lys639, and Lys647 each participate in a glycyl lysine isopeptide (Lys-Gly) (interchain with G-Cter in SUMO2) cross-link. Thr653 is modified (phosphothreonine). Residues Lys727 and Lys742 each participate in a glycyl lysine isopeptide (Lys-Gly) (interchain with G-Cter in SUMO2) cross-link. The disordered stretch occupies residues 765–798; sequence HQSSPDLSSEESETEKEIKRKAEVKKTKAGNTKE. A phosphoserine mark is found at Ser772 and Ser773. The span at 779-790 shows a compositional bias: basic and acidic residues; sequence EKEIKRKAEVKK. Thr821 is modified (phosphothreonine). A Phosphoserine modification is found at Ser824. A Glycyl lysine isopeptide (Lys-Gly) (interchain with G-Cter in SUMO2) cross-link involves residue Lys840. The residue at position 860 (Ser860) is a Phosphoserine. The region spanning 875-930 is the SANT domain; the sequence is IQDKEWNEKELQKLHCAFASLPKHKPGFWSEVAAAVGSRSPEECQRKYMENPRGKG. A Glycyl lysine isopeptide (Lys-Gly) (interchain with G-Cter in SUMO2) cross-link involves residue Lys899. Residues 923 to 957 form a disordered region; it reads MENPRGKGSQKHVTKKKPANSKGQNGKRGDADQKQ. Basic residues predominate over residues 930–941; sequence GSQKHVTKKKPA. Glycyl lysine isopeptide (Lys-Gly) (interchain with G-Cter in SUMO2) cross-links involve residues Lys956, Lys964, and Lys983. Position 1008 is a phosphoserine (Ser1008). Lys1079 participates in a covalent cross-link: Glycyl lysine isopeptide (Lys-Gly) (interchain with G-Cter in SUMO2). A Phosphoserine modification is found at Ser1086. 2 positions are modified to phosphothreonine: Thr1087 and Thr1089. A phosphoserine mark is found at Ser1104 and Ser1116.

In terms of assembly, interacts with SP1. Interacts with MIS18A. Identified in a complex containing MIS18A, OIP5/MIS18B, MIS18BP1, RBBP7 and RBBP4. Interacts with KAT7/HBO1. Interacts (via N-terminus) with FLNA (via N-terminus).

It is found in the nucleus. The protein localises to the chromosome. Its subcellular location is the centromere. In terms of biological role, required for recruitment of CENPA to centromeres and normal chromosome segregation during mitosis. In Homo sapiens (Human), this protein is Mis18-binding protein 1 (MIS18BP1).